A 251-amino-acid chain; its full sequence is Probable transcriptional regulatory protein CT1665 (251 aa).

This sequence belongs to the TACO1 family.

Its subcellular location is the cytoplasm. The sequence is that of Probable transcriptional regulatory protein CT1665 from Chlorobaculum tepidum (strain ATCC 49652 / DSM 12025 / NBRC 103806 / TLS) (Chlorobium tepidum).